Here is a 671-residue protein sequence, read N- to C-terminus: Putative ubiquitin thioesterase 232R (671 aa).

Disordered stretches follow at residues 36–62, 100–123, 171–203, and 250–319; these read EIID…RRIS, SPKI…PVRQ, NQKP…RPVF, and EPIR…SKRS. Residues 110–123 show a composition bias toward low complexity; that stretch reads PSPVHSPVRSPVRQ. Residues 182–200 show a composition bias toward pro residues; it reads RRSPSPRRSPSPRRSPSPR. Residues 255–271 are compositionally biased toward low complexity; the sequence is SSSSRSSRSTRRSSSTK. Positions 272–319 are enriched in basic residues; sequence PSRRSSSRSRRSSSRSRRSSSRSRRSSSRSRRSSRRSTSRSRSLSKRS. One can recognise an OTU domain in the interval 392 to 521; sequence FRMINVPLDG…NFHYIALEPF (130 aa). Residue Asp-400 is part of the active site. Cys-403 acts as the Nucleophile in catalysis. The active site involves His-514. Residues 589–625 are disordered; that stretch reads KRSLRPSIPPKISTEHRRTPKLRPSVPRPSSIRQSQP.

The catalysed reaction is Thiol-dependent hydrolysis of ester, thioester, amide, peptide and isopeptide bonds formed by the C-terminal Gly of ubiquitin (a 76-residue protein attached to proteins as an intracellular targeting signal).. In terms of biological role, hydrolase that can remove conjugated ubiquitin from proteins and may therefore play an important regulatory role at the level of protein turnover by preventing degradation. The polypeptide is Putative ubiquitin thioesterase 232R (Acheta domesticus (House cricket)).